The sequence spans 472 residues: MSDSNNIEDNVVINTITNTDTNDTTPPTTDTNTTPSVTLKRRFVGKKKIAAQQQQQNENIDNVTTTKTTTTTTTTTTPITKDIVTTEKKVKVFGRGLAMAAQQIPDEIMNDKELNLAVKILPSNYNFEIFKTIWRIKQASAKRVALQFPEGLLMYSCIISDIIEKFASVETIIMGDVTYGACCVDDYTARSLGADFMVHYGHSCLIPIDVSEIKMLYVFVDIQFDLQHFIETLKFNFKQTQKLIMVSTIQFSASLQSSREPLSEYFSNIFIPQEKPLSPGEILGCTSPKIKFTSPDGDEENNEIVIYLGDGRFHLESIMISNPHVKSYRYDPYSKVFSLEKYDFQEMYKIRRDAIETASKATKFGIILGTLGRQGSPKILDHLEQLLKSNGKHYTTVLLSEIFPAKLDMFSDIESWIQIACPRLSIDWGYAFTTPLLNPYEAEVCLGGINWQSVYPMDFYSKEGGKWTNYSK.

[4Fe-4S] cluster-binding residues include Cys182, Cys285, and Cys421.

The protein belongs to the DPH1/DPH2 family. DPH1 subfamily. In terms of assembly, component of the 2-(3-amino-3-carboxypropyl)histidine synthase complex composed of dph1, dph2, dph3 and a NADH-dependent reductase. It depends on [4Fe-4S] cluster as a cofactor.

The catalysed reaction is L-histidyl-[translation elongation factor 2] + S-adenosyl-L-methionine = 2-[(3S)-amino-3-carboxypropyl]-L-histidyl-[translation elongation factor 2] + S-methyl-5'-thioadenosine + H(+). It participates in protein modification; peptidyl-diphthamide biosynthesis. In terms of biological role, catalyzes the first step of diphthamide biosynthesis, a post-translational modification of histidine which occurs in elongation factor 2. Dph1 and dph2 transfer a 3-amino-3-carboxypropyl (ACP) group from S-adenosyl-L-methionine (SAM) to a histidine residue, the reaction is assisted by a reduction system comprising dph3 and a NADH-dependent reductase. This chain is 2-(3-amino-3-carboxypropyl)histidine synthase subunit 1 (dph1), found in Dictyostelium discoideum (Social amoeba).